Here is a 322-residue protein sequence, read N- to C-terminus: Mitochondrial glutamate carrier 1 (322 aa).

Solcar repeat units lie at residues 6–93, 101–214, and 223–312; these read ISLP…FRYQ, LTLF…LNEL, and SPFY…GIAE. Transmembrane regions (helical) follow at residues 12 to 32, 62 to 82, 107 to 127, 189 to 209, 223 to 243, and 292 to 312; these read LING…IDLA, YFGM…EKAI, MLAG…MEML, GLGA…PLFA, SPFY…AVAV, and ALVI…GIAE.

Belongs to the mitochondrial carrier (TC 2.A.29) family.

Its subcellular location is the mitochondrion inner membrane. The enzyme catalyses L-glutamate(in) + H(+)(in) = L-glutamate(out) + H(+)(out). In terms of biological role, mitochondrial glutamate/H(+) symporter. Responsible for the transport of glutamate from the cytosol into the mitochondrial matrix with the concomitant import of a proton. Plays a role in the control of glucose-stimulated insulin secretion. This Bos taurus (Bovine) protein is Mitochondrial glutamate carrier 1 (SLC25A22).